Consider the following 230-residue polypeptide: tRNA (guanine-N(7)-)-methyltransferase (230 aa).

S-adenosyl-L-methionine contacts are provided by E61, E86, D113, and D135. Residue D135 is part of the active site. Residues K139, D171, and 209-212 contribute to the substrate site; that span reads TRYE.

This sequence belongs to the class I-like SAM-binding methyltransferase superfamily. TrmB family.

The enzyme catalyses guanosine(46) in tRNA + S-adenosyl-L-methionine = N(7)-methylguanosine(46) in tRNA + S-adenosyl-L-homocysteine. Its pathway is tRNA modification; N(7)-methylguanine-tRNA biosynthesis. Functionally, catalyzes the formation of N(7)-methylguanine at position 46 (m7G46) in tRNA. In Azorhizobium caulinodans (strain ATCC 43989 / DSM 5975 / JCM 20966 / LMG 6465 / NBRC 14845 / NCIMB 13405 / ORS 571), this protein is tRNA (guanine-N(7)-)-methyltransferase.